The primary structure comprises 516 residues: Protein DML1 (516 aa).

It belongs to the misato family.

Its subcellular location is the mitochondrion. Its function is as follows. Involved in the partitioning of the mitochondrial organelle and mitochondrial DNA (mtDNA) inheritance. The protein is Protein DML1 (DML1) of Coccidioides immitis (strain RS) (Valley fever fungus).